A 267-amino-acid chain; its full sequence is Interleukin-1 beta (267 aa).

A propeptide spanning residues 1-114 is cleaved from the precursor; that stretch reads MAIVPEPAKE…ETCNDDFVCD (114 aa).

Belongs to the IL-1 family. (Microbial infection) Interacts with African swine fever virus (ASFV) protein L83L. As to quaternary structure, monomer. In its precursor form, weakly interacts with full-length MEFV; the mature cytokine does not interact at all. Interacts with integrins ITGAV:ITGBV and ITGA5:ITGB1; integrin-binding is required for IL1B signaling. Interacts with cargo receptor TMED10; the interaction is direct and is required for the secretion of IL1B mature form. Interacts with HSP90AB1; the interaction facilitates cargo translocation into the ERGIC. Interacts with HSP90B1; the interaction facilitates cargo translocation into the ERGIC.

It localises to the cytoplasm. The protein localises to the cytosol. The protein resides in the secreted. Its subcellular location is the lysosome. It is found in the extracellular exosome. In terms of biological role, potent pro-inflammatory cytokine. Initially discovered as the major endogenous pyrogen, induces prostaglandin synthesis, neutrophil influx and activation, T-cell activation and cytokine production, B-cell activation and antibody production, and fibroblast proliferation and collagen production. Promotes Th17 differentiation of T-cells. Synergizes with IL12/interleukin-12 to induce IFNG synthesis from T-helper 1 (Th1) cells. Plays a role in angiogenesis by inducing VEGF production synergistically with TNF and IL6. Involved in transduction of inflammation downstream of pyroptosis: its mature form is specifically released in the extracellular milieu by passing through the gasdermin-D (GSDMD) pore. The sequence is that of Interleukin-1 beta (IL1B) from Sus scrofa (Pig).